Reading from the N-terminus, the 254-residue chain is NADPH-dependent ferric-chelate reductase (254 aa).

In terms of domain architecture, FAD-binding FR-type spans 15 to 136 (LRFRELTVLR…AGPRGSLVVP (122 aa)).

Belongs to the SIP oxidoreductase family.

The protein localises to the cytoplasm. The enzyme catalyses 2 a Fe(II)-siderophore + NADP(+) + H(+) = 2 a Fe(III)-siderophore + NADPH. Plays a role in iron homeostasis under excess nickel conditions. The sequence is that of NADPH-dependent ferric-chelate reductase (yqjH) from Escherichia coli (strain K12).